A 339-amino-acid chain; its full sequence is Phosphoribosylformylglycinamidine cyclo-ligase (339 aa).

Belongs to the AIR synthase family.

Its subcellular location is the cytoplasm. The enzyme catalyses 2-formamido-N(1)-(5-O-phospho-beta-D-ribosyl)acetamidine + ATP = 5-amino-1-(5-phospho-beta-D-ribosyl)imidazole + ADP + phosphate + H(+). The protein operates within purine metabolism; IMP biosynthesis via de novo pathway; 5-amino-1-(5-phospho-D-ribosyl)imidazole from N(2)-formyl-N(1)-(5-phospho-D-ribosyl)glycinamide: step 2/2. The sequence is that of Phosphoribosylformylglycinamidine cyclo-ligase from Streptococcus thermophilus (strain ATCC BAA-250 / LMG 18311).